Consider the following 55-residue polypeptide: Potassium channel toxin alpha-KTX 12 Sp2 (55 aa).

The first 18 residues, 1 to 18 (MRLAIILLLMTTIVLTIG), serve as a signal peptide directing secretion. Disulfide bonds link Cys26/Cys46, Cys32/Cys51, and Cys36/Cys53.

Belongs to the short scorpion toxin superfamily. Potassium channel inhibitor family. Alpha-KTx 12 subfamily. As to expression, expressed by the venom gland.

It is found in the secreted. Its function is as follows. Blocks mouse voltage-gated potassium channels Kv1.3/KCNA3 (IC(50)=0.3-30 nM), when the channel is expressed in Jurkat T cells or in HEK293 cells. Also shows a weaker inhibition on mKv1.2/KCNA2 (IC(50)=56.9 nM) and mKv1.1/KCNA1 (IC(50)=485 nM). Probably through the inhibition of both Kv1.2/KCNA2 and Kv1.3/KCNA3, the toxin also reduces the free calcium concentration in Jurkat T cells, inhibits the activation of Jurkat T cells and reduces the release of inflammatory cytokines interleukin-2, showing a strong immunosuppressant effect. This Scorpiops pococki (Scorpion) protein is Potassium channel toxin alpha-KTX 12 Sp2.